We begin with the raw amino-acid sequence, 188 residues long: Probable nicotinate-nucleotide adenylyltransferase (188 aa).

The protein belongs to the NadD family.

The catalysed reaction is nicotinate beta-D-ribonucleotide + ATP + H(+) = deamido-NAD(+) + diphosphate. It functions in the pathway cofactor biosynthesis; NAD(+) biosynthesis; deamido-NAD(+) from nicotinate D-ribonucleotide: step 1/1. Catalyzes the reversible adenylation of nicotinate mononucleotide (NaMN) to nicotinic acid adenine dinucleotide (NaAD). The chain is Probable nicotinate-nucleotide adenylyltransferase from Acholeplasma laidlawii (strain PG-8A).